The sequence spans 487 residues: Argininosuccinate lyase (487 aa).

This sequence belongs to the lyase 1 family. Argininosuccinate lyase subfamily.

The protein resides in the cytoplasm. It catalyses the reaction 2-(N(omega)-L-arginino)succinate = fumarate + L-arginine. It functions in the pathway amino-acid biosynthesis; L-arginine biosynthesis; L-arginine from L-ornithine and carbamoyl phosphate: step 3/3. The sequence is that of Argininosuccinate lyase from Methanothrix thermoacetophila (strain DSM 6194 / JCM 14653 / NBRC 101360 / PT) (Methanosaeta thermophila).